The sequence spans 428 residues: Trigger factor (428 aa).

Positions 166 to 250 (GDIVTFDFKG…IKNIKEKILP (85 aa)) constitute a PPIase FKBP-type domain.

This sequence belongs to the FKBP-type PPIase family. Tig subfamily.

The protein resides in the cytoplasm. It catalyses the reaction [protein]-peptidylproline (omega=180) = [protein]-peptidylproline (omega=0). In terms of biological role, involved in protein export. Acts as a chaperone by maintaining the newly synthesized protein in an open conformation. Functions as a peptidyl-prolyl cis-trans isomerase. In Mycoplasma mycoides subsp. mycoides SC (strain CCUG 32753 / NCTC 10114 / PG1), this protein is Trigger factor.